The following is a 336-amino-acid chain: tRNA N6-adenosine threonylcarbamoyltransferase (336 aa).

Fe cation is bound by residues histidine 111 and histidine 115. Substrate contacts are provided by residues 134–138, aspartate 167, glycine 180, aspartate 184, and asparagine 272; that span reads VVSGG. Aspartate 300 serves as a coordination point for Fe cation.

Belongs to the KAE1 / TsaD family. Requires Fe(2+) as cofactor.

The protein resides in the cytoplasm. The enzyme catalyses L-threonylcarbamoyladenylate + adenosine(37) in tRNA = N(6)-L-threonylcarbamoyladenosine(37) in tRNA + AMP + H(+). Functionally, required for the formation of a threonylcarbamoyl group on adenosine at position 37 (t(6)A37) in tRNAs that read codons beginning with adenine. Is involved in the transfer of the threonylcarbamoyl moiety of threonylcarbamoyl-AMP (TC-AMP) to the N6 group of A37, together with TsaE and TsaB. TsaD likely plays a direct catalytic role in this reaction. The protein is tRNA N6-adenosine threonylcarbamoyltransferase of Caldicellulosiruptor saccharolyticus (strain ATCC 43494 / DSM 8903 / Tp8T 6331).